We begin with the raw amino-acid sequence, 326 residues long: ELMO domain-containing protein 1 (326 aa).

The 174-residue stretch at Q133 to L306 folds into the ELMO domain.

In terms of biological role, acts as a GTPase-activating protein (GAP) toward guanine nucleotide exchange factors like ARL2, ARL3, ARF1 and ARF6, but not for GTPases outside the Arf family. The protein is ELMO domain-containing protein 1 (ELMOD1) of Pongo abelii (Sumatran orangutan).